Consider the following 360-residue polypeptide: Acetylxylan esterase / glucomannan deacetylase (360 aa).

The signal sequence occupies residues 1–21 (MKPHALIGLLAGMLLSSSLYA). Catalysis depends on Ser151, which acts as the Nucleophile.

This sequence belongs to the carbohydrate esterase 2 (CE2) family.

Its subcellular location is the secreted. It carries out the reaction Deacetylation of xylans and xylo-oligosaccharides.. Its pathway is glycan degradation; xylan degradation. Functionally, involved in the degradation of plant cell wall polysaccharides. Catalyzes the deacetylation of acetylated birchwood xylan and glucomannan, with a large preference for the latter, and of the synthetic substrate 4-nitrophenyl acetate (4-NPAc). This chain is Acetylxylan esterase / glucomannan deacetylase, found in Cellvibrio japonicus (strain Ueda107) (Pseudomonas fluorescens subsp. cellulosa).